A 102-amino-acid polypeptide reads, in one-letter code: Small ribosomal subunit protein bS6 (102 aa).

It belongs to the bacterial ribosomal protein bS6 family.

In terms of biological role, binds together with bS18 to 16S ribosomal RNA. The chain is Small ribosomal subunit protein bS6 from Solidesulfovibrio magneticus (strain ATCC 700980 / DSM 13731 / RS-1) (Desulfovibrio magneticus).